A 372-amino-acid chain; its full sequence is Spermidine/putrescine import ATP-binding protein PotA (372 aa).

Residues Ile-11 to Ile-241 enclose the ABC transporter domain. Gly-43–Thr-50 contributes to the ATP binding site.

It belongs to the ABC transporter superfamily. Spermidine/putrescine importer (TC 3.A.1.11.1) family. As to quaternary structure, the complex is composed of two ATP-binding proteins (PotA), two transmembrane proteins (PotB and PotC) and a solute-binding protein (PotD).

The protein resides in the cell inner membrane. The catalysed reaction is ATP + H2O + polyamine-[polyamine-binding protein]Side 1 = ADP + phosphate + polyamineSide 2 + [polyamine-binding protein]Side 1.. In terms of biological role, part of the ABC transporter complex PotABCD involved in spermidine/putrescine import. Responsible for energy coupling to the transport system. This chain is Spermidine/putrescine import ATP-binding protein PotA, found in Aggregatibacter actinomycetemcomitans (Actinobacillus actinomycetemcomitans).